Reading from the N-terminus, the 717-residue chain is Aryl hydrocarbon receptor nuclear translocator 2 (717 aa).

Disordered stretches follow at residues 1-20 and 35-74; these read MATP…PGSV and MAGA…IERR. The residue at position 42 (R42) is an Omega-N-methylarginine. Positions 63-73 are enriched in basic and acidic residues; it reads FSRENHSEIER. One can recognise a bHLH domain in the interval 63 to 116; that stretch reads FSRENHSEIERRRRNKMTQYITELSDMVPTCSALARKPDKLTILRMAVSHMKSM. PAS domains lie at 134–209 and 323–393; these read TEQE…MTGR and PVCM…VKLK. A PAC domain is found at 398 to 441; that stretch reads SVMYRFRTKNREWMLIRTSSFTFQNPYSDEIEYIICTNTNVKQL. Residues 548–717 are disordered; it reads NDIQSSSSTG…DLGMFPPFSE (170 aa). Composition is skewed to polar residues over residues 549-574 and 585-605; these read DIQS…QVAW and QIPS…TSHT. The span at 610 to 625 shows a compositional bias: low complexity; the sequence is PSSYSPLSSPATSSPS. Positions 642–651 are enriched in polar residues; the sequence is SGQSSGQFQG. Over residues 658-680 the composition is skewed to low complexity; it reads SQWQSQHHGQQSGEQHSHQQPGQ.

Efficient DNA binding requires dimerization with another bHLH protein. Heterodimer with NPAS4. Heterodimer with SIM1. Heterodimer with the aryl hydrocarbon receptor (AHR) or the SIM1 protein. Interacts with TACC3.

The protein resides in the nucleus. Transcription factor that plays a role in the development of the hypothalamo-pituitary axis, postnatal brain growth, and visual and renal function. Specifically recognizes the xenobiotic response element (XRE). This chain is Aryl hydrocarbon receptor nuclear translocator 2 (ARNT2), found in Homo sapiens (Human).